The following is a 78-amino-acid chain: UPF0349 protein ABC2936 (78 aa).

It belongs to the UPF0349 family.

This Shouchella clausii (strain KSM-K16) (Alkalihalobacillus clausii) protein is UPF0349 protein ABC2936.